A 206-amino-acid chain; its full sequence is Small ribosomal subunit protein uS4 (206 aa).

Residues 96–156 (GRLDNVVYRM…EKAKKQARIK (61 aa)) form the S4 RNA-binding domain.

The protein belongs to the universal ribosomal protein uS4 family. As to quaternary structure, part of the 30S ribosomal subunit. Contacts protein S5. The interaction surface between S4 and S5 is involved in control of translational fidelity.

Functionally, one of the primary rRNA binding proteins, it binds directly to 16S rRNA where it nucleates assembly of the body of the 30S subunit. With S5 and S12 plays an important role in translational accuracy. In Aeromonas salmonicida (strain A449), this protein is Small ribosomal subunit protein uS4.